A 380-amino-acid polypeptide reads, in one-letter code: Cytochrome b (380 aa).

4 consecutive transmembrane segments (helical) span residues 33–53, 77–98, 113–133, and 178–198; these read FGSL…FLAM, WLIR…YLHI, WNVG…GYVL, and FFAF…LHFL. Heme b-binding residues include H83 and H97. Residues H182 and H196 each coordinate heme b. Residue H201 participates in a ubiquinone binding. A run of 4 helical transmembrane segments spans residues 226 to 246, 288 to 308, 320 to 340, and 347 to 367; these read YKDL…SLFS, LGGV…PILH, LTQI…WIGG, and FIIV…VIMP.

The protein belongs to the cytochrome b family. In terms of assembly, the cytochrome bc1 complex contains 3 respiratory subunits (MT-CYB, CYC1 and UQCRFS1), 2 core proteins (UQCRC1 and UQCRC2) and probably 6 low-molecular weight proteins. It depends on heme b as a cofactor.

The protein localises to the mitochondrion inner membrane. Functionally, component of the ubiquinol-cytochrome c reductase complex (complex III or cytochrome b-c1 complex) that is part of the mitochondrial respiratory chain. The b-c1 complex mediates electron transfer from ubiquinol to cytochrome c. Contributes to the generation of a proton gradient across the mitochondrial membrane that is then used for ATP synthesis. This chain is Cytochrome b (mt-cyb), found in Zeus faber (John Dory).